The sequence spans 432 residues: Ribosomal protein uS12 methylthiotransferase RimO (432 aa).

In terms of domain architecture, MTTase N-terminal spans 1-112 (MKIGVVSLGC…ILNYLGLKEK (112 aa)). The [4Fe-4S] cluster site is built by C10, C46, C75, C134, C138, and C141. Residues 120 to 350 (STPRSYAYLK…MAIQRGITRK (231 aa)) form the Radical SAM core domain. A TRAM domain is found at 353-422 (EEFLGKEIEV…DYDLAGRDTE (70 aa)).

The protein belongs to the methylthiotransferase family. RimO subfamily. The cofactor is [4Fe-4S] cluster.

The protein localises to the cytoplasm. The catalysed reaction is L-aspartate(89)-[ribosomal protein uS12]-hydrogen + (sulfur carrier)-SH + AH2 + 2 S-adenosyl-L-methionine = 3-methylsulfanyl-L-aspartate(89)-[ribosomal protein uS12]-hydrogen + (sulfur carrier)-H + 5'-deoxyadenosine + L-methionine + A + S-adenosyl-L-homocysteine + 2 H(+). Its function is as follows. Catalyzes the methylthiolation of an aspartic acid residue of ribosomal protein uS12. The chain is Ribosomal protein uS12 methylthiotransferase RimO from Aquifex aeolicus (strain VF5).